A 305-amino-acid polypeptide reads, in one-letter code: Probable cell division protein WhiA (305 aa).

Residues 269–302 (TIKELGELLEPSLGKSGVNHRLRKLVEQANELRK) constitute a DNA-binding region (H-T-H motif).

It belongs to the WhiA family.

Functionally, involved in cell division and chromosome segregation. This Lactococcus lactis subsp. lactis (strain IL1403) (Streptococcus lactis) protein is Probable cell division protein WhiA.